Here is a 625-residue protein sequence, read N- to C-terminus: DNA-directed RNA polymerase subunit gamma (625 aa).

Residues Cys-71, Cys-73, Cys-86, and Cys-89 each contribute to the Zn(2+) site. Mg(2+) contacts are provided by Asp-467, Asp-469, and Asp-471.

The protein belongs to the RNA polymerase beta' chain family. RpoC1 subfamily. In cyanobacteria the RNAP catalytic core is composed of 2 alpha, 1 beta, 1 beta', 1 gamma and 1 omega subunit. When a sigma factor is associated with the core the holoenzyme is formed, which can initiate transcription. Mg(2+) is required as a cofactor. The cofactor is Zn(2+).

It carries out the reaction RNA(n) + a ribonucleoside 5'-triphosphate = RNA(n+1) + diphosphate. Functionally, DNA-dependent RNA polymerase catalyzes the transcription of DNA into RNA using the four ribonucleoside triphosphates as substrates. In Gloeothece citriformis (strain PCC 7424) (Cyanothece sp. (strain PCC 7424)), this protein is DNA-directed RNA polymerase subunit gamma.